Here is a 171-residue protein sequence, read N- to C-terminus: Homeobox protein engrailed-1-B (171 aa).

2 disordered regions span residues 1-41 (EDPG…NAAP) and 60-86 (YSDR…KRPR). The span at 15–29 (PDSDTPSDSSKGSDS) shows a compositional bias: low complexity. The segment at residues 82–141 (DKRPRTAFTAEQLQRLKAEFQANRYITEQRRQTLAQELSLNESQIKIWFQNKRAKIKKAS) is a DNA-binding region (homeobox).

This sequence belongs to the engrailed homeobox family.

It localises to the nucleus. Required for proper formation of the apical ectodermal ridge and correct dorsal-ventral patterning in the limb. This chain is Homeobox protein engrailed-1-B (en1-b), found in Xenopus laevis (African clawed frog).